The chain runs to 366 residues: Probable quinol oxidase subunit 2 (366 aa).

The signal sequence occupies residues 1–19 (MSKFKSLLLLFGTLILLSG). Cys20 is lipidated: N-palmitoyl cysteine. Cys20 carries S-diacylglycerol cysteine lipidation. A run of 2 helical transmembrane segments spans residues 38–58 (FLIL…LGMF) and 80–100 (AIIE…LAIP). The tract at residues 330–366 (EPYNNEFKKDESKNAKEMKKISKDAQDQDNDDHGGGH) is disordered. The segment covering 335-366 (EFKKDESKNAKEMKKISKDAQDQDNDDHGGGH) has biased composition (basic and acidic residues).

This sequence belongs to the cytochrome c oxidase subunit 2 family.

It is found in the cell membrane. The catalysed reaction is 2 a quinol + O2 = 2 a quinone + 2 H2O. In terms of biological role, catalyzes quinol oxidation with the concomitant reduction of oxygen to water. Subunit II transfers the electrons from a quinol to the binuclear center of the catalytic subunit I. The protein is Probable quinol oxidase subunit 2 (qoxA) of Staphylococcus aureus (strain USA300).